A 159-amino-acid chain; its full sequence is Testis-specific XK-related protein, Y-linked (159 aa).

3 helical membrane-spanning segments follow: residues 1-21 (MFIF…VGAI), 45-65 (IYLM…LAFF), and 72-92 (GSLH…WLEF).

This sequence belongs to the XK family. In terms of tissue distribution, testis specific.

Its subcellular location is the membrane. The polypeptide is Testis-specific XK-related protein, Y-linked (XKRY) (Homo sapiens (Human)).